The sequence spans 524 residues: Cytochrome P450 monooxygenase patH (524 aa).

The Cytoplasmic segment spans residues 1 to 4 (MEPM). The helical transmembrane segment at 5–23 (LLLILVAAVVLLFVRWAFV) threads the bilayer. At 24–524 (YGHRTSNMPK…KEVFSQFTEG (501 aa)) the chain is on the lumenal side. Asparagine 191 is a glycosylation site (N-linked (GlcNAc...) asparagine). Residue cysteine 442 participates in heme binding. An N-linked (GlcNAc...) asparagine glycan is attached at asparagine 499.

This sequence belongs to the cytochrome P450 family. The cofactor is heme.

The protein resides in the endoplasmic reticulum membrane. It catalyses the reaction 3-methylphenol + reduced [NADPH--hemoprotein reductase] + O2 = 3-hydroxybenzyl alcohol + oxidized [NADPH--hemoprotein reductase] + H2O + H(+). Its pathway is mycotoxin biosynthesis; patulin biosynthesis. Cytochrome P450 monooxygenase; part of the gene cluster that mediates the biosynthesis of patulin, an acetate-derived tetraketide mycotoxin produced by several fungal species that shows antimicrobial properties against several bacteria. PatH catalyzes the conversion of m-cresol into m-hydroxybenzyl alcohol. The pathway begins with the synthesis of 6-methylsalicylic acid by the polyketide synthase (PKS) patK via condensation of acetate and malonate units. The 6-methylsalicylic acid decarboxylase patG then catalyzes the decarboxylation of 6-methylsalicylic acid to yield m-cresol (also known as 3-methylphenol). These first reactions occur in the cytosol. The intermediate m-cresol is then transported into the endoplasmic reticulum where the cytochrome P450 monooxygenase patH converts it to m-hydroxybenzyl alcohol, which is further converted to gentisyl alcohol by the cytochrome P450 monooxygenase patI. The oxidoreductases patJ and patO further convert gentisyl alcohol to isoepoxydon in the vacuole. PatN catalyzes then the transformation of isoepoxydon into phyllostine. The cluster protein patF is responsible for the conversion from phyllostine to neopatulin whereas the alcohol dehydrogenase patD converts neopatulin to E-ascladiol. The steps between isoepoxydon and E-ascladiol occur in the cytosol, and E-ascladiol is probably secreted to the extracellular space by one of the cluster-specific transporters patC or patM. Finally, the secreted patulin synthase patE catalyzes the conversion of E-ascladiol to patulin. In Aspergillus clavatus (strain ATCC 1007 / CBS 513.65 / DSM 816 / NCTC 3887 / NRRL 1 / QM 1276 / 107), this protein is Cytochrome P450 monooxygenase patH.